A 184-amino-acid polypeptide reads, in one-letter code: Trichothecene 15-O-acetyltransferase SAT16 (184 aa).

Substrate is bound at residue His154.

The protein belongs to the trichothecene O-acetyltransferase family.

It participates in mycotoxin biosynthesis. In terms of biological role, trichothecene 15-O-acetyltransferase; part of the satratoxin SC2 cluster involved in the biosynthesis of satratoxins, trichothecene mycotoxins that are associated with human food poisonings. Satratoxins are suggested to be made by products of multiple gene clusters (SC1, SC2 and SC3) that encode 21 proteins in all, including polyketide synthases, acetyltransferases, and other enzymes expected to modify the trichothecene skeleton. SC1 encodes 10 proteins, SAT1 to SAT10. The largest are SAT8, which encodes a putative polyketide synthase (PKS) with a conventional non-reducing architecture, and SAT10, a putative protein containing four ankyrin repeats and thus may be involved in protein scaffolding. The putative short-chain reductase SAT3 may assist the PKS in some capacity. SAT6 contains a secretory lipase domain and acts probably as a trichothecene esterase. SAT5 encodes a putative acetyltransferase, and so, with SAT6, may affect endogenous protection from toxicity. The probable transcription factor SAT9 may regulate the expression of the SC1 cluster. SC2 encodes proteins SAT11 to SAT16, the largest of which encodes the putative reducing PKS SAT13. SAT11 is a cytochrome P450 monooxygenase, while SAT14 and SAT16 are probable acetyltransferases. The SC2 cluster may be regulated by the transcription factor SAT15. SC3 is a small cluster that encodes 5 proteins, SAT17 to SAT21. SAT21 is a putative MFS-type transporter which may have a role in exporting secondary metabolites. The four other proteins putatively encoded in SC3 include the taurine hydroxylase-like protein SAT17, the O-methyltransferase SAT18, the acetyltransferase SAT19, and the Cys6-type zinc finger SAT20, the latter being probably involved in regulation of SC3 expression. This is Trichothecene 15-O-acetyltransferase SAT16 from Stachybotrys chartarum (strain CBS 109288 / IBT 7711) (Toxic black mold).